A 205-amino-acid polypeptide reads, in one-letter code: Orotate phosphoribosyltransferase (205 aa).

116–124 contributes to the 5-phospho-alpha-D-ribose 1-diphosphate binding site; that stretch reads EDIITTGGS. Orotate is bound by residues Thr120 and Arg148.

Belongs to the purine/pyrimidine phosphoribosyltransferase family. PyrE subfamily. Homodimer. Mg(2+) serves as cofactor.

The enzyme catalyses orotidine 5'-phosphate + diphosphate = orotate + 5-phospho-alpha-D-ribose 1-diphosphate. It functions in the pathway pyrimidine metabolism; UMP biosynthesis via de novo pathway; UMP from orotate: step 1/2. In terms of biological role, catalyzes the transfer of a ribosyl phosphate group from 5-phosphoribose 1-diphosphate to orotate, leading to the formation of orotidine monophosphate (OMP). The polypeptide is Orotate phosphoribosyltransferase (Wolinella succinogenes (strain ATCC 29543 / DSM 1740 / CCUG 13145 / JCM 31913 / LMG 7466 / NCTC 11488 / FDC 602W) (Vibrio succinogenes)).